Reading from the N-terminus, the 541-residue chain is Membrane protein insertase YidC (541 aa).

5 consecutive transmembrane segments (helical) span residues 7-27 (LLVIALLFISFLVYQQWQLDY), 346-368 (IVQNWGLAIIGVTLVVKAILYPL), 416-436 (LGGCLPILLQMPIFIALYWTF), 454-474 (LSAQDPYYILPILMGASMFLL), and 495-515 (PLIFMVFFLWFPSGLVLYWLV).

This sequence belongs to the OXA1/ALB3/YidC family. Type 1 subfamily. In terms of assembly, interacts with the Sec translocase complex via SecD. Specifically interacts with transmembrane segments of nascent integral membrane proteins during membrane integration.

It is found in the cell inner membrane. In terms of biological role, required for the insertion and/or proper folding and/or complex formation of integral membrane proteins into the membrane. Involved in integration of membrane proteins that insert both dependently and independently of the Sec translocase complex, as well as at least some lipoproteins. Aids folding of multispanning membrane proteins. This chain is Membrane protein insertase YidC, found in Pasteurella multocida (strain Pm70).